A 376-amino-acid polypeptide reads, in one-letter code: UDP-N-acetylglucosamine--N-acetylmuramyl-(pentapeptide) pyrophosphoryl-undecaprenol N-acetylglucosamine transferase (376 aa).

UDP-N-acetyl-alpha-D-glucosamine contacts are provided by residues 11 to 13, Asn117, Arg160, Ser208, and Gln310; that span reads TGG.

This sequence belongs to the glycosyltransferase 28 family. MurG subfamily.

The protein resides in the cell inner membrane. It catalyses the reaction di-trans,octa-cis-undecaprenyl diphospho-N-acetyl-alpha-D-muramoyl-L-alanyl-D-glutamyl-meso-2,6-diaminopimeloyl-D-alanyl-D-alanine + UDP-N-acetyl-alpha-D-glucosamine = di-trans,octa-cis-undecaprenyl diphospho-[N-acetyl-alpha-D-glucosaminyl-(1-&gt;4)]-N-acetyl-alpha-D-muramoyl-L-alanyl-D-glutamyl-meso-2,6-diaminopimeloyl-D-alanyl-D-alanine + UDP + H(+). It participates in cell wall biogenesis; peptidoglycan biosynthesis. Cell wall formation. Catalyzes the transfer of a GlcNAc subunit on undecaprenyl-pyrophosphoryl-MurNAc-pentapeptide (lipid intermediate I) to form undecaprenyl-pyrophosphoryl-MurNAc-(pentapeptide)GlcNAc (lipid intermediate II). The chain is UDP-N-acetylglucosamine--N-acetylmuramyl-(pentapeptide) pyrophosphoryl-undecaprenol N-acetylglucosamine transferase from Rickettsia massiliae (strain Mtu5).